The following is a 723-amino-acid chain: Envelope glycoprotein H (723 aa).

The signal sequence occupies residues 1–23 (MSPATRFTVISCLVVSLITPSET). Over 24-700 (SSWFDPFIEW…IIDIRQTSIF (677 aa)) the chain is Virion surface. N-linked (GlcNAc...) asparagine; by host glycosylation is found at Asn39, Asn45, Asn144, and Asn174. An interaction with gL region spans residues 197 to 263 (HQFAIVLTFT…QSYRDDLLIV (67 aa)). Asn270, Asn340, Asn411, Asn543, Asn621, and Asn681 each carry an N-linked (GlcNAc...) asparagine; by host glycan. Residues 701-721 (MIMLYCSLGVLLLYGLYRLLH) form a helical membrane-spanning segment. At 722–723 (MI) the chain is on the intravirion side.

The protein belongs to the herpesviridae glycoprotein H family. Interacts with glycoprotein L (gL); this interaction is necessary for the correct processing and cell surface expression of gH. The heterodimer gH/gL seems to interact with gB trimers during fusion. Post-translationally, N-glycosylated, O-glycosylated, and sialylated.

It is found in the virion membrane. The protein resides in the host cell membrane. Its subcellular location is the host endosome membrane. The heterodimer glycoprotein H-glycoprotein L is required for the fusion of viral and plasma membranes leading to virus entry into the host cell. Following initial binding to host receptor, membrane fusion is mediated by the fusion machinery composed of gB and the heterodimer gH/gL. May also be involved in the fusion between the virion envelope and the outer nuclear membrane during virion morphogenesis. This is Envelope glycoprotein H from Guinea pig cytomegalovirus (strain 22122) (GPCMV).